Consider the following 340-residue polypeptide: Aurora kinase A- and ninein-interacting protein (340 aa).

The segment at 175–340 is interaction with AURKA; it reads QREAKRKGEG…DSEGNRVIRH (166 aa). Positions 178 to 190 are enriched in basic and acidic residues; sequence AKRKGEGLRESKT. The segment at 178–209 is disordered; it reads AKRKGEGLRESKTDCPGMGSHIRPPGSKCHQP. The interval 266-340 is interaction with RBBP8/CtIP; that stretch reads RDSWSQLFTE…DSEGNRVIRH (75 aa). A Phosphoserine modification is found at Ser277. The interval 293–317 is disordered; sequence DVTNARNQGSGQFPDSPQAQGQDGP. Over residues 296–313 the composition is skewed to polar residues; the sequence is NARNQGSGQFPDSPQAQG.

The protein belongs to the AUNIP family. In terms of assembly, interacts (via C-terminus) with AURKA (via C-terminus). Interacts (via N-terminus) with NIN; this interaction blocks NIN phosphorylation by both AURKA and GSK3B. Identified in a complex with NIN and AURKA. Interacts with RBBP8/CtIP.

The protein localises to the nucleus. It localises to the chromosome. Its subcellular location is the cytoplasm. It is found in the cytoskeleton. The protein resides in the microtubule organizing center. The protein localises to the centrosome. It localises to the spindle pole. Its function is as follows. DNA-binding protein that accumulates at DNA double-strand breaks (DSBs) following DNA damage and promotes DNA resection and homologous recombination. Serves as a sensor of DNA damage: binds DNA with a strong preference for DNA substrates that mimic structures generated at stalled replication forks, and anchors RBBP8/CtIP to DSB sites to promote DNA end resection and ensuing homologous recombination repair. Inhibits non-homologous end joining (NHEJ). Required for the dynamic movement of AURKA at the centrosomes and spindle apparatus during the cell cycle. The polypeptide is Aurora kinase A- and ninein-interacting protein (Mus musculus (Mouse)).